The sequence spans 780 residues: Protein phosphatase 1 regulatory subunit 21 (780 aa).

Coiled coils occupy residues 1–209 (MASA…NLHE) and 556–605 (ESRE…DRLR). Residues 84–104 (EPRGKKNKKSGESSSQLSQEQ) are disordered. Low complexity predominate over residues 95–104 (ESSSQLSQEQ). At threonine 652 the chain carries Phosphothreonine. Residues 694 to 742 (AECRALSKRLALAEKSKETLTEEMRLASQNISRLQDELMTTKRSYEDQL) are a coiled coil.

In terms of assembly, component of the FERRY complex, composed of five subunits: TBCK, PPP1R21, FERRY3, CRYZL1 and GATAD1, with a ratio of 1:2:1:2:4 respectively. PPP1R21 serves as a binding hub connecting all five complex subunits to mediate the binding to specific mitochondrial mRNAs. Interacts with the GTP-bound form of RAB5A (via its C-terminal region); linking the mRNP complex onto trafficking endosomes for active mRNA transport. Interacts with PPP1CA. In terms of tissue distribution, expressed at 16 dpc in the cortex (at protein level).

The protein localises to the early endosome. In terms of biological role, component of the FERRY complex (Five-subunit Endosomal Rab5 and RNA/ribosome intermediary). The FERRY complex directly interacts with mRNAs and RAB5A, and functions as a RAB5A effector involved in the localization and the distribution of specific mRNAs most likely by mediating their endosomal transport. The complex recruits mRNAs and ribosomes to early endosomes through direct mRNA-interaction. In the complex, PPP1R21 serves as a binding hub connecting all five complex subunits and mediating the binding to mRNA and early endosomes via RAB5A. Putative regulator of protein phosphatase 1 (PP1) activity. May play a role in the endosomal sorting process or in endosome maturation pathway. This chain is Protein phosphatase 1 regulatory subunit 21 (Ppp1r21), found in Mus musculus (Mouse).